The primary structure comprises 460 residues: ATP synthase subunit beta (460 aa).

150–157 (GGAGVGKT) provides a ligand contact to ATP.

Belongs to the ATPase alpha/beta chains family. F-type ATPases have 2 components, CF(1) - the catalytic core - and CF(0) - the membrane proton channel. CF(1) has five subunits: alpha(3), beta(3), gamma(1), delta(1), epsilon(1). CF(0) has three main subunits: a(1), b(2) and c(9-12). The alpha and beta chains form an alternating ring which encloses part of the gamma chain. CF(1) is attached to CF(0) by a central stalk formed by the gamma and epsilon chains, while a peripheral stalk is formed by the delta and b chains.

Its subcellular location is the cell inner membrane. It catalyses the reaction ATP + H2O + 4 H(+)(in) = ADP + phosphate + 5 H(+)(out). Functionally, produces ATP from ADP in the presence of a proton gradient across the membrane. The catalytic sites are hosted primarily by the beta subunits. This chain is ATP synthase subunit beta, found in Enterobacter sp. (strain 638).